A 169-amino-acid polypeptide reads, in one-letter code: Protein YABBY 7 (169 aa).

The segment at 21-48 (CSFCATVLLVSVPCSSVLRVVAVQCGHC) adopts a C4-type zinc-finger fold. The segment at 63 to 122 (SASIELTPQELDAGPPPGEYSDESSGDDREGRDAEDDAPAPAAAAVANKPPGRKQRTPSA) is disordered.

Belongs to the YABBY family. In terms of tissue distribution, expressed in leaf sheaths and flowers.

The protein localises to the nucleus. The protein is Protein YABBY 7 (YAB7) of Oryza sativa subsp. japonica (Rice).